The chain runs to 544 residues: GMP synthase [glutamine-hydrolyzing] (544 aa).

A Glutamine amidotransferase type-1 domain is found at 12–210 (TILILDFGSQ…VKNVCGVRDG (199 aa)). C88 functions as the Nucleophile in the catalytic mechanism. Active-site residues include H184 and E186. Residues 211-419 (WSMESFIPKE…LNIPEHLVGR (209 aa)) form the GMPS ATP-PPase domain. ATP is bound at residue 239–245 (SGGVDST). XMP is bound by residues R312, D481, K536, and E542.

Homodimer. Also forms a small population of homotetramers. The cofactor is Mg(2+).

It is found in the cytoplasm. Its subcellular location is the cytosol. It carries out the reaction XMP + L-glutamine + ATP + H2O = GMP + L-glutamate + AMP + diphosphate + 2 H(+). Its pathway is purine metabolism; GMP biosynthesis; GMP from XMP (L-Gln route): step 1/1. With respect to regulation, the enzyme is inhibited by ECC1385; although this compound fails to inhibit growth of the organism. Catalyzes the conversion of xanthine monophosphate (XMP) to GMP in the presence of glutamine and ATP through an adenyl-XMP intermediate. The protein is GMP synthase [glutamine-hydrolyzing] of Cryptococcus neoformans var. grubii serotype A (strain H99 / ATCC 208821 / CBS 10515 / FGSC 9487) (Filobasidiella neoformans var. grubii).